The primary structure comprises 149 residues: SsrA-binding protein (149 aa).

The interval glycine 121–arginine 149 is disordered.

The protein belongs to the SmpB family.

The protein localises to the cytoplasm. In terms of biological role, required for rescue of stalled ribosomes mediated by trans-translation. Binds to transfer-messenger RNA (tmRNA), required for stable association of tmRNA with ribosomes. tmRNA and SmpB together mimic tRNA shape, replacing the anticodon stem-loop with SmpB. tmRNA is encoded by the ssrA gene; the 2 termini fold to resemble tRNA(Ala) and it encodes a 'tag peptide', a short internal open reading frame. During trans-translation Ala-aminoacylated tmRNA acts like a tRNA, entering the A-site of stalled ribosomes, displacing the stalled mRNA. The ribosome then switches to translate the ORF on the tmRNA; the nascent peptide is terminated with the 'tag peptide' encoded by the tmRNA and targeted for degradation. The ribosome is freed to recommence translation, which seems to be the essential function of trans-translation. This Polaromonas sp. (strain JS666 / ATCC BAA-500) protein is SsrA-binding protein.